Reading from the N-terminus, the 166-residue chain is MDLQSRLEALIAPSLDAMGYELVRVQLQGKQRLTLQIMADRKDGVMMAVDDCADISRSVSALLDVEDPISAAYTLEVSSPGIDRPLTRAKDFVAWAGFEAKMESCQPIDGRKRFRGKLLGLDEAGVNVRLVIEAAGEIAIPLADVRGAKLVLTDELIAATLKDQEE.

This sequence belongs to the RimP family.

It localises to the cytoplasm. Required for maturation of 30S ribosomal subunits. This is Ribosome maturation factor RimP from Paramagnetospirillum magneticum (strain ATCC 700264 / AMB-1) (Magnetospirillum magneticum).